We begin with the raw amino-acid sequence, 351 residues long: Dihydroorotate dehydrogenase (quinone) (351 aa).

Residues 61–65 (AGLDK) and Thr85 contribute to the FMN site. Lys65 lines the substrate pocket. Substrate is bound at residue 110–114 (NRMGF). Residues Asn139 and Asn172 each coordinate FMN. Substrate is bound at residue Asn172. Ser175 (nucleophile) is an active-site residue. Asn177 provides a ligand contact to substrate. Lys217 and Thr245 together coordinate FMN. 246 to 247 (NT) is a binding site for substrate. Residues Gly268, Gly297, and 318 to 319 (YS) contribute to the FMN site.

The protein belongs to the dihydroorotate dehydrogenase family. Type 2 subfamily. In terms of assembly, monomer. FMN serves as cofactor.

Its subcellular location is the cell membrane. The catalysed reaction is (S)-dihydroorotate + a quinone = orotate + a quinol. It participates in pyrimidine metabolism; UMP biosynthesis via de novo pathway; orotate from (S)-dihydroorotate (quinone route): step 1/1. Its function is as follows. Catalyzes the conversion of dihydroorotate to orotate with quinone as electron acceptor. This Xanthomonas campestris pv. campestris (strain 8004) protein is Dihydroorotate dehydrogenase (quinone).